Reading from the N-terminus, the 123-residue chain is Large ribosomal subunit protein uL14 (123 aa).

The protein belongs to the universal ribosomal protein uL14 family. In terms of assembly, part of the 50S ribosomal subunit. Forms a cluster with proteins L3 and L19. In the 70S ribosome, L14 and L19 interact and together make contacts with the 16S rRNA in bridges B5 and B8.

Its function is as follows. Binds to 23S rRNA. Forms part of two intersubunit bridges in the 70S ribosome. This is Large ribosomal subunit protein uL14 from Escherichia coli O6:K15:H31 (strain 536 / UPEC).